The following is a 281-amino-acid chain: 2-dehydro-3-deoxyphosphooctonate aldolase 1 (281 aa).

The protein belongs to the KdsA family.

Its subcellular location is the cytoplasm. The enzyme catalyses D-arabinose 5-phosphate + phosphoenolpyruvate + H2O = 3-deoxy-alpha-D-manno-2-octulosonate-8-phosphate + phosphate. The protein operates within carbohydrate biosynthesis; 3-deoxy-D-manno-octulosonate biosynthesis; 3-deoxy-D-manno-octulosonate from D-ribulose 5-phosphate: step 2/3. Its pathway is bacterial outer membrane biogenesis; lipopolysaccharide biosynthesis. This Pseudomonas putida (strain ATCC 47054 / DSM 6125 / CFBP 8728 / NCIMB 11950 / KT2440) protein is 2-dehydro-3-deoxyphosphooctonate aldolase 1 (kdsA1).